The primary structure comprises 230 residues: MYLVFGIIFTSVIVTSCSYNTKDFNSVPDFSPVRADLGYAPSRTAQTYPLPPRESNYSLYRASGNSFFRDPRAMQPGDVLTVQISINDRASLNNKSDLKSDSSSKYTIGTGYSFMDRIAGSLEGESSNQSKGDGKIERQENIRLSVAAIVTDVLPNGNLIIRGSQEVRVNHELRILNIAGVVRPRDISGNNMIEYDKIAEARISYGGRGRISEIQQPPYGQQLLNQISPF.

The signal sequence occupies residues 1-16 (MYLVFGIIFTSVIVTS). Cys17 is lipidated: N-palmitoyl cysteine. A lipid anchor (S-diacylglycerol cysteine) is attached at Cys17.

The protein belongs to the FlgH family. In terms of assembly, the basal body constitutes a major portion of the flagellar organelle and consists of four rings (L,P,S, and M) mounted on a central rod.

The protein localises to the cell outer membrane. It is found in the bacterial flagellum basal body. Its function is as follows. Assembles around the rod to form the L-ring and probably protects the motor/basal body from shearing forces during rotation. The polypeptide is Flagellar L-ring protein (Bartonella bacilliformis (strain ATCC 35685 / KC583 / Herrer 020/F12,63)).